We begin with the raw amino-acid sequence, 396 residues long: uncharacterized protein (396 aa).

It belongs to the NAD(P)-dependent epimerase/dehydratase family. It depends on NAD(+) as a cofactor. The cofactor is NADP(+).

Putative nucleotide sugar epimerase/dehydrogenase. This is an uncharacterized protein from Sinorhizobium fredii (strain NBRC 101917 / NGR234).